The following is a 437-amino-acid chain: Mitochondrial distribution and morphology protein 12 (437 aa).

The region spanning 1-437 (MSIDINWRTA…VYPSFWTFLI (437 aa)) is the SMP-LTD domain. Residues 73–85 (DDDADTSDVSEDL) are compositionally biased toward acidic residues. Disordered regions lie at residues 73–101 (DDDA…SELN), 187–274 (SDSG…PPRM), and 354–384 (SEQQ…RQGG). Positions 91-101 (SQWDRTHSELN) are enriched in basic and acidic residues. 2 stretches are compositionally biased toward polar residues: residues 215-240 (DTSN…NNLN) and 371-381 (ADSSAHTSQKR).

This sequence belongs to the MDM12 family. As to quaternary structure, component of the ER-mitochondria encounter structure (ERMES) or MDM complex, composed of mmm1, mdm10, mdm12 and mdm34. A mmm1 homodimer associates with one molecule of mdm12 on each side in a pairwise head-to-tail manner, and the SMP-LTD domains of mmm1 and mdm12 generate a continuous hydrophobic tunnel for phospholipid trafficking.

The protein resides in the mitochondrion outer membrane. It localises to the endoplasmic reticulum membrane. Its function is as follows. Component of the ERMES/MDM complex, which serves as a molecular tether to connect the endoplasmic reticulum (ER) and mitochondria. Components of this complex are involved in the control of mitochondrial shape and protein biogenesis, and function in nonvesicular lipid trafficking between the ER and mitochondria. Mdm12 is required for the interaction of the ER-resident membrane protein mmm1 and the outer mitochondrial membrane-resident beta-barrel protein mdm10. The mdm12-mmm1 subcomplex functions in the major beta-barrel assembly pathway that is responsible for biogenesis of all mitochondrial outer membrane beta-barrel proteins, and acts in a late step after the SAM complex. The mdm10-mdm12-mmm1 subcomplex further acts in the TOM40-specific pathway after the action of the mdm12-mmm1 complex. Essential for establishing and maintaining the structure of mitochondria and maintenance of mtDNA nucleoids. The sequence is that of Mitochondrial distribution and morphology protein 12 from Aspergillus clavatus (strain ATCC 1007 / CBS 513.65 / DSM 816 / NCTC 3887 / NRRL 1 / QM 1276 / 107).